We begin with the raw amino-acid sequence, 64 residues long: Disintegrin lebein-1-beta (64 aa).

The region spanning 1 to 64 (NSGNPCCDPV…SDCPRNPYKD (64 aa)) is the Disintegrin domain. 4 disulfide bridges follow: cysteine 6/cysteine 29, cysteine 20/cysteine 26, cysteine 25/cysteine 50, and cysteine 38/cysteine 57. The Cell attachment site motif lies at 42 to 44 (RGD).

This sequence belongs to the disintegrin family. Dimeric disintegrin subfamily. Heterodimer with subunit alpha; disulfide-linked. As to expression, expressed by the venom gland.

Its subcellular location is the secreted. Functionally, strongly inhibits ADP-induced platelet aggregation on human platelet-rich plasma. Also avidly binds to the laminin-binding beta-1 integrins (alpha-3/beta-1, alpha-6/beta-1, and alpha-7/beta-1) in an RGD-independent manner. This chain is Disintegrin lebein-1-beta, found in Macrovipera lebetinus (Levantine viper).